The sequence spans 64 residues: Toxin Tce3 (64 aa).

The region spanning 1 to 62 is the LCN-type CS-alpha/beta domain; sequence KDGYIIEHRG…IFDSNNNKCS (62 aa). Disulfide bonds link Cys-11–Cys-61, Cys-15–Cys-37, Cys-23–Cys-42, and Cys-27–Cys-44.

This sequence belongs to the long (4 C-C) scorpion toxin superfamily. Sodium channel inhibitor family. Beta subfamily. Expressed by the venom gland.

The protein localises to the secreted. Its function is as follows. Inhibits the sodium (Nav) currents in an apparent irreversible manner. Produces small depolarization and induces repetitive firing in squid axons. Is specific for arthropods (crickets, triatomides, crabs and squids), but is non-toxic to mice. Shows antibacterial activity against both Gram-positive and Gram-negative bacteria. The polypeptide is Toxin Tce3 (Tityus cerroazul (Scorpion)).